The following is a 316-amino-acid chain: uncharacterized protein (316 aa).

The helical transmembrane segment at 12 to 34 (RWVCLTSVILFCFCIAVMRYGGV) threads the bilayer.

It localises to the membrane. This is an uncharacterized protein from Treponema pallidum (strain Nichols).